Here is a 711-residue protein sequence, read N- to C-terminus: Polyribonucleotide nucleotidyltransferase (711 aa).

Mg(2+) contacts are provided by D486 and D492. The KH domain maps to 553 to 612 (PRIHTIKISTDKIKDVIGKGGSVIRALTEETGTTIEIEDDGTVKIAATDGEKAKYAIRRI). Residues 622-690 (GRIYNGKVTR…RQGRVRLSIK (69 aa)) form the S1 motif domain. The interval 689–711 (IKEATEQTQPAAAPEAPTSEQGE) is disordered. A compositionally biased stretch (low complexity) spans 694-711 (EQTQPAAAPEAPTSEQGE).

This sequence belongs to the polyribonucleotide nucleotidyltransferase family. Component of the RNA degradosome, which is a multiprotein complex involved in RNA processing and mRNA degradation. Mg(2+) serves as cofactor.

The protein localises to the cytoplasm. The catalysed reaction is RNA(n+1) + phosphate = RNA(n) + a ribonucleoside 5'-diphosphate. In terms of biological role, involved in mRNA degradation. Catalyzes the phosphorolysis of single-stranded polyribonucleotides processively in the 3'- to 5'-direction. The protein is Polyribonucleotide nucleotidyltransferase of Salmonella arizonae (strain ATCC BAA-731 / CDC346-86 / RSK2980).